The primary structure comprises 438 residues: Delta(14)-sterol reductase ERG24 (438 aa).

Over 1 to 13 the chain is Lumenal; that stretch reads MVSALNPRTTEFE. A helical membrane pass occupies residues 14-34; that stretch reads FGGLIGALGISIGLPVFTIIL. The Cytoplasmic segment spans residues 35–71; the sequence is NQMIRPDYFIKGFFQNFDIVELWNGIKPLRYYLGNRE. A helical transmembrane segment spans residues 72 to 90; it reads LWTVYCLWYGILAVLDVIL. The Lumenal segment spans residues 91–109; that stretch reads PGRVMKGVQLRDGSKLSYK. The chain crosses the membrane as a helical span at residues 110–127; sequence INGIAMSTTLVLVLAIRW. At 128–147 the chain is on the cytoplasmic side; that stretch reads KLTDGQLPELQYLYENHVSL. The chain crosses the membrane as a helical span at residues 148–172; sequence CIISILFSFFLATYCYVASFIPLIF. The Lumenal portion of the chain corresponds to 173–242; that stretch reads KKNGNGKREK…LHHHYLKTGK (70 aa). Residues 243-263 form a helical membrane-spanning segment; it reads INDALVLVNFLQGFYIFDGVL. At 264–308 the chain is on the cytoplasmic side; the sequence is NEEGVLTMMDITTDGFGFMLAFGDLSLVPFTYSLQARYLSVSPVE. A helical membrane pass occupies residues 309–328; it reads LGWVKVVGILAIMFLGFHIF. The Lumenal portion of the chain corresponds to 329 to 368; it reads HSANKQKSEFRQGKLENLKSIQTKRGTKLLCDGWWAKSQH. Residues Lys335, Arg339, Leu358, Trp363, 370-371, Asp410, 414-418, and Tyr425 each bind NADP(+); these read NY and CRLKY. Residues 369 to 387 traverse the membrane as a helical segment; the sequence is INYFGDWLISLSWCLATWF. Residues 388-438 lie on the Cytoplasmic side of the membrane; sequence QTPLTYYYSLYFATLLLHRQQRDEHKCRLKYGENWEEYERKVPYKIIPYVY.

It belongs to the ERG4/ERG24 family.

The protein resides in the membrane. It catalyses the reaction 4,4-dimethyl-5alpha-cholesta-8,24-dien-3beta-ol + NADP(+) = 4,4-dimethyl-5alpha-cholesta-8,14,24-trien-3beta-ol + NADPH + H(+). It functions in the pathway steroid biosynthesis; zymosterol biosynthesis; zymosterol from lanosterol: step 2/6. With respect to regulation, inhibited by the morpholine antifungal drug fenpropimorph. Delta(14)-sterol reductase; part of the third module of ergosterol biosynthesis pathway that includes the late steps of the pathway. ERG24 reduces the C14=C15 double bond of 4,4-dimethyl-cholesta-8,14,24-trienol to produce 4,4-dimethyl-cholesta-8,24-dienol. The third module or late pathway involves the ergosterol synthesis itself through consecutive reactions that mainly occur in the endoplasmic reticulum (ER) membrane. Firstly, the squalene synthase ERG9 catalyzes the condensation of 2 farnesyl pyrophosphate moieties to form squalene, which is the precursor of all steroids. Squalene synthase is crucial for balancing the incorporation of farnesyl diphosphate (FPP) into sterol and nonsterol isoprene synthesis. Secondly, the squalene epoxidase ERG1 catalyzes the stereospecific oxidation of squalene to (S)-2,3-epoxysqualene, which is considered to be a rate-limiting enzyme in steroid biosynthesis. Then, the lanosterol synthase ERG7 catalyzes the cyclization of (S)-2,3 oxidosqualene to lanosterol, a reaction that forms the sterol core. In the next steps, lanosterol is transformed to zymosterol through a complex process involving various demethylation, reduction and desaturation reactions. The lanosterol 14-alpha-demethylase ERG11 (also known as CYP51) catalyzes C14-demethylation of lanosterol to produce 4,4'-dimethyl cholesta-8,14,24-triene-3-beta-ol, which is critical for ergosterol biosynthesis. The C-14 reductase ERG24 reduces the C14=C15 double bond of 4,4-dimethyl-cholesta-8,14,24-trienol to produce 4,4-dimethyl-cholesta-8,24-dienol. 4,4-dimethyl-cholesta-8,24-dienol is substrate of the C-4 demethylation complex ERG25-ERG26-ERG27 in which ERG25 catalyzes the three-step monooxygenation required for the demethylation of 4,4-dimethyl and 4alpha-methylsterols, ERG26 catalyzes the oxidative decarboxylation that results in a reduction of the 3-beta-hydroxy group at the C-3 carbon to an oxo group, and ERG27 is responsible for the reduction of the keto group on the C-3. ERG28 has a role as a scaffold to help anchor ERG25, ERG26 and ERG27 to the endoplasmic reticulum and ERG29 regulates the activity of the iron-containing C4-methylsterol oxidase ERG25. Then, the sterol 24-C-methyltransferase ERG6 catalyzes the methyl transfer from S-adenosyl-methionine to the C-24 of zymosterol to form fecosterol. The C-8 sterol isomerase ERG2 catalyzes the reaction which results in unsaturation at C-7 in the B ring of sterols and thus converts fecosterol to episterol. The sterol-C5-desaturase ERG3 then catalyzes the introduction of a C-5 double bond in the B ring to produce 5-dehydroepisterol. The C-22 sterol desaturase ERG5 further converts 5-dehydroepisterol into ergosta-5,7,22,24(28)-tetraen-3beta-ol by forming the C-22(23) double bond in the sterol side chain. Finally, ergosta-5,7,22,24(28)-tetraen-3beta-ol is substrate of the C-24(28) sterol reductase ERG4 to produce ergosterol. In Saccharomyces cerevisiae (strain ATCC 204508 / S288c) (Baker's yeast), this protein is Delta(14)-sterol reductase ERG24.